The chain runs to 89 residues: Sodium channel toxin To13 (89 aa).

The N-terminal stretch at 1–18 (MKTLFLIITSFILLEVEG) is a signal peptide. One can recognise an LCN-type CS-alpha/beta domain in the interval 20-87 (KNGYPRDSKG…TWKNKEPKCK (68 aa)). 4 disulfide bridges follow: cysteine 30/cysteine 86, cysteine 34/cysteine 60, cysteine 45/cysteine 67, and cysteine 49/cysteine 69.

It belongs to the long (4 C-C) scorpion toxin superfamily. Sodium channel inhibitor family. As to expression, expressed by the venom gland.

Its subcellular location is the secreted. In terms of biological role, inhibits voltage-gated sodium channels (Nav). The polypeptide is Sodium channel toxin To13 (Tityus obscurus (Amazonian scorpion)).